Reading from the N-terminus, the 308-residue chain is Carbonic anhydrase 6 (308 aa).

Residues 1 to 17 (MRALVLLLSLFLLGGQA) form the signal peptide. Positions 21–278 (SDWTYSEGAL…LNHRVVESNF (258 aa)) constitute an Alpha-carbonic anhydrase domain. Cys-42 and Cys-224 are disulfide-bonded. The N-linked (GlcNAc...) asparagine glycan is linked to Asn-67. Catalysis depends on His-85, which acts as the Proton donor/acceptor. Positions 111, 113, and 138 each coordinate Zn(2+). Position 220–221 (220–221 (TT)) interacts with substrate. Residue Asn-256 is glycosylated (N-linked (GlcNAc...) asparagine).

This sequence belongs to the alpha-carbonic anhydrase family. Requires Zn(2+) as cofactor. In terms of tissue distribution, major constituent of saliva.

The protein resides in the secreted. The enzyme catalyses hydrogencarbonate + H(+) = CO2 + H2O. With respect to regulation, inhibited by coumarins, sulfonamide derivatives such as acetazolamide (AZA), saccharin and Foscarnet (phosphonoformate trisodium salt). Its function is as follows. Reversible hydration of carbon dioxide. Its role in saliva is unknown. This is Carbonic anhydrase 6 (CA6) from Homo sapiens (Human).